The following is a 79-amino-acid chain: D-alanyl carrier protein (79 aa).

The region spanning 1–76 is the Carrier domain; that stretch reads MKEQIFDIIE…KIAARVQEKT (76 aa). At S34 the chain carries O-(pantetheine 4'-phosphoryl)serine.

The protein belongs to the DltC family. In terms of processing, 4'-phosphopantetheine is transferred from CoA to a specific serine of apo-DCP.

The protein resides in the cytoplasm. The protein operates within cell wall biogenesis; lipoteichoic acid biosynthesis. In terms of biological role, carrier protein involved in the D-alanylation of lipoteichoic acid (LTA). The loading of thioester-linked D-alanine onto DltC is catalyzed by D-alanine--D-alanyl carrier protein ligase DltA. The DltC-carried D-alanyl group is further transferred to cell membrane phosphatidylglycerol (PG) by forming an ester bond, probably catalyzed by DltD. D-alanylation of LTA plays an important role in modulating the properties of the cell wall in Gram-positive bacteria, influencing the net charge of the cell wall. The protein is D-alanyl carrier protein of Lactococcus lactis subsp. cremoris (strain SK11).